The chain runs to 216 residues: Homeobox-leucine zipper protein ATHB-40 (216 aa).

Residues 28–52 (GEVKQPKRRRKKTKGSVASADGGNG) are disordered. The homeobox DNA-binding region spans 52 to 111 (GLFRKRKLTDEQVNMLEMSFGDEHKLESERKDRLAAELGLDPRQVAVWFQNRRARWKNKR). Residues 112-140 (LEEEYNKLKNSHDNVVVDKCRLESEVIQL) are leucine-zipper.

This sequence belongs to the HD-ZIP homeobox family. Class I subfamily. As to expression, expressed in roots, flowers and siliques.

The protein localises to the nucleus. Functionally, probable transcription factor. The polypeptide is Homeobox-leucine zipper protein ATHB-40 (ATHB-40) (Arabidopsis thaliana (Mouse-ear cress)).